The sequence spans 174 residues: Large ribosomal subunit protein uL15 (174 aa).

2 disordered regions span residues 1–56 and 150–174; these read MKLH…GQMR and VERRSRSRGPNPPRHHRKAEATPGA. The segment covering 21–35 has biased composition (gly residues); that stretch reads RGIGSGKGKTGGKGM.

Belongs to the universal ribosomal protein uL15 family. In terms of assembly, part of the 50S ribosomal subunit.

Its function is as follows. Binds to the 23S rRNA. The sequence is that of Large ribosomal subunit protein uL15 from Roseiflexus castenholzii (strain DSM 13941 / HLO8).